The following is a 196-amino-acid chain: Holliday junction branch migration complex subunit RuvA (196 aa).

The domain I stretch occupies residues 1-65; that stretch reads MIGYLRGKII…EDALQLFGFH (65 aa). A domain II region spans residues 66 to 140; the sequence is DKEEKNLFLS…GKLVSIEEGG (75 aa). A flexible linker region spans residues 140-144; the sequence is GVVAK. Positions 145–196 are domain III; that stretch reads AKSVAHTQITSALLNLGYKSQLVDQFVSSLPADIAVEDGIRKGFQTLSGGLS.

This sequence belongs to the RuvA family. As to quaternary structure, homotetramer. Forms an RuvA(8)-RuvB(12)-Holliday junction (HJ) complex. HJ DNA is sandwiched between 2 RuvA tetramers; dsDNA enters through RuvA and exits via RuvB. An RuvB hexamer assembles on each DNA strand where it exits the tetramer. Each RuvB hexamer is contacted by two RuvA subunits (via domain III) on 2 adjacent RuvB subunits; this complex drives branch migration. In the full resolvosome a probable DNA-RuvA(4)-RuvB(12)-RuvC(2) complex forms which resolves the HJ.

It is found in the cytoplasm. In terms of biological role, the RuvA-RuvB-RuvC complex processes Holliday junction (HJ) DNA during genetic recombination and DNA repair, while the RuvA-RuvB complex plays an important role in the rescue of blocked DNA replication forks via replication fork reversal (RFR). RuvA specifically binds to HJ cruciform DNA, conferring on it an open structure. The RuvB hexamer acts as an ATP-dependent pump, pulling dsDNA into and through the RuvAB complex. HJ branch migration allows RuvC to scan DNA until it finds its consensus sequence, where it cleaves and resolves the cruciform DNA. This chain is Holliday junction branch migration complex subunit RuvA, found in Bdellovibrio bacteriovorus (strain ATCC 15356 / DSM 50701 / NCIMB 9529 / HD100).